The chain runs to 571 residues: FAD-linked oxidoreductase patO (571 aa).

Positions 1–23 (MRLHQSPPRLLVCILSVLQVSAG) are cleaved as a signal peptide. 10 N-linked (GlcNAc...) asparagine glycosylation sites follow: N47, N101, N125, N179, N341, N374, N380, N421, N445, and N480. In terms of domain architecture, FAD-binding PCMH-type spans 115–294 (TLGAMVRYAV…YAVTVKTFPD (180 aa)).

This sequence belongs to the oxygen-dependent FAD-linked oxidoreductase family. FAD serves as cofactor.

The protein resides in the vacuole lumen. It functions in the pathway mycotoxin biosynthesis; patulin biosynthesis. Its function is as follows. FAD-linked oxidoreductase; part of the gene cluster that mediates the biosynthesis of patulin, an acetate-derived tetraketide mycotoxin produced by several fungal species that shows antimicrobial properties against several bacteria. PatO acts with patJ in the vacuole to convert gentisyl alcohol to isoepoxydon. The pathway begins with the synthesis of 6-methylsalicylic acid by the polyketide synthase (PKS) patK via condensation of acetate and malonate units. The 6-methylsalicylic acid decarboxylase patG then catalyzes the decarboxylation of 6-methylsalicylic acid to yield m-cresol (also known as 3-methylphenol). These first reactions occur in the cytosol. The intermediate m-cresol is then transported into the endoplasmic reticulum where the cytochrome P450 monooxygenase patH converts it to m-hydroxybenzyl alcohol, which is further converted to gentisyl alcohol by the cytochrome P450 monooxygenase patI. The oxidoreductases patJ and patO further convert gentisyl alcohol to isoepoxydon in the vacuole. PatN catalyzes then the transformation of isoepoxydon into phyllostine. The cluster protein patF is responsible for the conversion from phyllostine to neopatulin whereas the alcohol dehydrogenase patD converts neopatulin to E-ascladiol. The steps between isoepoxydon and E-ascladiol occur in the cytosol, and E-ascladiol is probably secreted to the extracellular space by one of the cluster-specific transporters patC or patM. Finally, the secreted patulin synthase patE catalyzes the conversion of E-ascladiol to patulin. The polypeptide is FAD-linked oxidoreductase patO (Penicillium expansum (Blue mold rot fungus)).